A 345-amino-acid chain; its full sequence is Alanine racemase (345 aa).

The Proton acceptor; specific for D-alanine role is filled by Lys33. Residue Lys33 is modified to N6-(pyridoxal phosphate)lysine. A substrate-binding site is contributed by Arg128. Residue Tyr242 is the Proton acceptor; specific for L-alanine of the active site. Met291 is a substrate binding site.

Belongs to the alanine racemase family. Requires pyridoxal 5'-phosphate as cofactor.

It catalyses the reaction L-alanine = D-alanine. It participates in amino-acid biosynthesis; D-alanine biosynthesis; D-alanine from L-alanine: step 1/1. Functionally, catalyzes the interconversion of L-alanine and D-alanine. May also act on other amino acids. This chain is Alanine racemase (alr), found in Ruegeria sp. (strain TM1040) (Silicibacter sp.).